The chain runs to 231 residues: Thymidylate kinase (231 aa).

Glycine 10–threonine 17 serves as a coordination point for ATP.

The protein belongs to the thymidylate kinase family.

The catalysed reaction is dTMP + ATP = dTDP + ADP. Its function is as follows. Phosphorylation of dTMP to form dTDP in both de novo and salvage pathways of dTTP synthesis. The protein is Thymidylate kinase of Acaryochloris marina (strain MBIC 11017).